The primary structure comprises 191 residues: Elongation factor P (191 aa).

The protein belongs to the elongation factor P family.

The protein localises to the cytoplasm. Its pathway is protein biosynthesis; polypeptide chain elongation. Functionally, involved in peptide bond synthesis. Stimulates efficient translation and peptide-bond synthesis on native or reconstituted 70S ribosomes in vitro. Probably functions indirectly by altering the affinity of the ribosome for aminoacyl-tRNA, thus increasing their reactivity as acceptors for peptidyl transferase. The protein is Elongation factor P of Bartonella henselae (strain ATCC 49882 / DSM 28221 / CCUG 30454 / Houston 1) (Rochalimaea henselae).